A 391-amino-acid polypeptide reads, in one-letter code: Digeranylgeranylglycerophospholipid reductase (391 aa).

FAD-binding residues include Gly-19, Asp-38, Cys-49, Ala-50, Ala-52, Arg-99, Val-123, Asp-279, Gly-291, and Ile-292. An a 2,3-bis-O-(geranylgeranyl)-sn-glycerol 1-phospholipid-binding site is contributed by Val-369.

This sequence belongs to the geranylgeranyl reductase family. DGGGPL reductase subfamily. FAD is required as a cofactor.

The catalysed reaction is a 2,3-bis-O-phytanyl-sn-glycerol 1-phospholipid + 8 A = a 2,3-bis-O-(geranylgeranyl)-sn-glycerol 1-phospholipid + 8 AH2. The enzyme catalyses 2,3-bis-O-(phytanyl)-sn-glycerol 1-phosphate + 8 A = 2,3-bis-O-(geranylgeranyl)-sn-glycerol 1-phosphate + 8 AH2. It carries out the reaction CDP-2,3-bis-O-(geranylgeranyl)-sn-glycerol + 8 AH2 = CDP-2,3-bis-O-(phytanyl)-sn-glycerol + 8 A. It catalyses the reaction archaetidylserine + 8 AH2 = 2,3-bis-O-phytanyl-sn-glycero-3-phospho-L-serine + 8 A. The protein operates within membrane lipid metabolism; glycerophospholipid metabolism. Functionally, is involved in the reduction of 2,3-digeranylgeranylglycerophospholipids (unsaturated archaeols) into 2,3-diphytanylglycerophospholipids (saturated archaeols) in the biosynthesis of archaeal membrane lipids. Catalyzes the formation of archaetidic acid (2,3-di-O-phytanyl-sn-glyceryl phosphate) from 2,3-di-O-geranylgeranylglyceryl phosphate (DGGGP) via the hydrogenation of each double bond of the isoprenoid chains. Is also probably able to reduce double bonds of geranyl groups in CDP-2,3-bis-O-(geranylgeranyl)-sn-glycerol and archaetidylserine, thus acting at various stages in the biosynthesis of archaeal membrane lipids. This chain is Digeranylgeranylglycerophospholipid reductase, found in Methanococcus aeolicus (strain ATCC BAA-1280 / DSM 17508 / OCM 812 / Nankai-3).